Consider the following 374-residue polypeptide: NAD-capped RNA hydrolase ndx-9 (374 aa).

Residues C181, C184, C199, and C202 each contribute to the Zn(2+) site. Residues Y207, 243–245 (AGF), E259, E263, and E307 contribute to the substrate site. Positions 208–336 (PTFSPVSITL…LADPLLKNLP (129 aa)) constitute a Nudix hydrolase domain. A243, E259, E263, and E307 together coordinate Mg(2+). Residues 244 to 265 (GFAHSGESMAECARREIAEEVG) carry the Nudix box motif. A Microbody targeting signal motif is present at residues 367-369 (LEN).

Belongs to the Nudix hydrolase family. NudC subfamily. Homodimer. Mg(2+) is required as a cofactor. It depends on Mn(2+) as a cofactor. Requires Zn(2+) as cofactor.

The enzyme catalyses a 5'-end NAD(+)-phospho-ribonucleoside in mRNA + H2O = a 5'-end phospho-adenosine-phospho-ribonucleoside in mRNA + beta-nicotinamide D-ribonucleotide + 2 H(+). It catalyses the reaction NAD(+) + H2O = beta-nicotinamide D-ribonucleotide + AMP + 2 H(+). It carries out the reaction NADH + H2O = reduced beta-nicotinamide D-ribonucleotide + AMP + 2 H(+). In terms of biological role, mRNA decapping enzyme that specifically removes the nicotinamide adenine dinucleotide (NAD) cap from a subset of mRNAs by hydrolyzing the diphosphate linkage to produce nicotinamide mononucleotide (NMN) and 5' monophosphate mRNA. The NAD-cap is present at the 5'-end of some RNAs; in contrast to the canonical N7 methylguanosine (m7G) cap, the NAD cap promotes mRNA decay. Mediates the hydrolysis of some nucleoside diphosphate derivatives. This chain is NAD-capped RNA hydrolase ndx-9 (ndx-9), found in Caenorhabditis elegans.